The following is a 291-amino-acid chain: Probable plasmid-partitioning protein ParB (291 aa).

The protein belongs to the ParB family.

The chain is Probable plasmid-partitioning protein ParB from Deinococcus radiodurans (strain ATCC 13939 / DSM 20539 / JCM 16871 / CCUG 27074 / LMG 4051 / NBRC 15346 / NCIMB 9279 / VKM B-1422 / R1).